The primary structure comprises 72 residues: Protein RALF-like 11 (72 aa).

The N-terminal stretch at 1-17 is a signal peptide; it reads MKAWLICLLVICAAVIA. Disulfide bonds link Cys-34–Cys-43 and Cys-63–Cys-69.

This sequence belongs to the plant rapid alkalinization factor (RALF) family.

The protein localises to the secreted. In terms of biological role, cell signaling peptide that may regulate plant stress, growth, and development. Mediates a rapid alkalinization of extracellular space by mediating a transient increase in the cytoplasmic Ca(2+) concentration leading to a calcium-dependent signaling events through a cell surface receptor and a concomitant activation of some intracellular mitogen-activated protein kinases. This Arabidopsis thaliana (Mouse-ear cress) protein is Protein RALF-like 11 (RALFL11).